The chain runs to 92 residues: Protease inhibitors (92 aa).

A signal peptide spans 1 to 19; sequence MKFALALCAAVLLVVLVQA. Pacifastin domains lie at 20–54 and 57–92; these read EEKCTPGQVKQQDCNTCTCTPTGVWGCTRKGCQPA and EISCEPGKTFKDKCNTCRCGADGKSAACTLKACPNQ. Intrachain disulfides connect cysteine 23–cysteine 38, cysteine 33–cysteine 51, cysteine 36–cysteine 46, cysteine 60–cysteine 75, cysteine 70–cysteine 89, and cysteine 73–cysteine 84. Residue threonine 65 is glycosylated (O-linked (Fuc) threonine).

The protein belongs to the protease inhibitor I19 family. In terms of tissue distribution, brain and fat body.

It is found in the secreted. In terms of biological role, both LCMI I and II are inhibitors of chymotrypsin and elastase (in vitro). They both inhibit the prophenol oxidase activation cascade. In Locusta migratoria (Migratory locust), this protein is Protease inhibitors.